We begin with the raw amino-acid sequence, 204 residues long: Recombination protein RecR (204 aa).

The C4-type zinc-finger motif lies at 58–75; it reads CSVCQNITDVGVDPCALC. One can recognise a Toprim domain in the interval 83 to 181; that stretch reads SVICVVESPV…HVTKIARGIP (99 aa).

The protein belongs to the RecR family.

May play a role in DNA repair. It seems to be involved in an RecBC-independent recombinational process of DNA repair. It may act with RecF and RecO. This Pelodictyon phaeoclathratiforme (strain DSM 5477 / BU-1) protein is Recombination protein RecR.